A 262-amino-acid chain; its full sequence is MPAELSPIDTAKFAAARRAVDLVQDGMKLGLGTGSTAAWMVRCLAERVREEGLRVQGVPTSTRTAELARALGIQVVTLDEAKWLDLTIDGADEFDADFNLIKGGGAALLQEKIVATASDRMVVIADAAKEVAHLGAFPLPVEVIPFGWQSTKMLIEETLEGMDVLGREVTLRLSGDAPLLTDEKNYILDLHLKRIGEPRKLGLALNQIAGVVENGLFIDICDTVVVGHGDGRVSLRDLQSGQAEEGFIDMDRARNIFADLGD.

Residues 33-36 (TGST), 89-92 (DGAD), and 102-105 (KGGG) each bind substrate. Residue Glu111 is the Proton acceptor of the active site. Lys129 contributes to the substrate binding site.

Belongs to the ribose 5-phosphate isomerase family. Homodimer.

It carries out the reaction aldehydo-D-ribose 5-phosphate = D-ribulose 5-phosphate. It participates in carbohydrate degradation; pentose phosphate pathway; D-ribose 5-phosphate from D-ribulose 5-phosphate (non-oxidative stage): step 1/1. In terms of biological role, catalyzes the reversible conversion of ribose-5-phosphate to ribulose 5-phosphate. The chain is Ribose-5-phosphate isomerase A from Cereibacter sphaeroides (strain KD131 / KCTC 12085) (Rhodobacter sphaeroides).